The sequence spans 239 residues: Ribosomal RNA small subunit methyltransferase G (239 aa).

S-adenosyl-L-methionine contacts are provided by residues Gly78, Phe83, 129–130, and Arg148; that span reads AE.

This sequence belongs to the methyltransferase superfamily. RNA methyltransferase RsmG family.

Its subcellular location is the cytoplasm. Specifically methylates the N7 position of a guanine in 16S rRNA. This chain is Ribosomal RNA small subunit methyltransferase G, found in Clostridium perfringens (strain SM101 / Type A).